Consider the following 846-residue polypeptide: Neurofilament medium polypeptide (846 aa).

Residues 1–10 (MSYTLDSLGN) are compositionally biased toward polar residues. A disordered region spans residues 1-52 (MSYTLDSLGNPSAYRRVPTETRSSFSRVSGSPSSGFRSQSWSRGSPSTVSSS). At S2 the chain carries N-acetylserine. A head region spans residues 2 to 104 (SYTLDSLGNP…LSRSNEKEQL (103 aa)). Residues 22–45 (RSSFSRVSGSPSSGFRSQSWSRGS) show a composition bias toward low complexity. Phosphoserine is present on S31. An Omega-N-methylarginine modification is found at R43. T48 carries O-linked (GlcNAc) threonine glycosylation. S98 bears the Phosphoserine mark. The 312-residue stretch at 100–411 (EKEQLQGLND…KLLEGEETRF (312 aa)) folds into the IF rod domain. The tract at residues 104-135 (LQGLNDRFAGYIEKVHYLEQQNKEIEAEIHAL) is coil 1A. The tract at residues 136 to 148 (RQKQASHAQLGDA) is linker 1. The interval 149–247 (YDQEIRELRA…EEEVADLLAQ (99 aa)) is coil 1B. S225 is modified (phosphoserine). Positions 248–264 (IQASHITVERKDYLKTD) are linker 12. The tract at residues 265–286 (ISTALKEIRSQLECHSDQNMHQ) is coil 2A. The tract at residues 287-290 (AEEW) is linker 2. The coil 2B stretch occupies residues 291 to 411 (FKCRYAKLTE…KLLEGEETRF (121 aa)). Y319 carries the phosphotyrosine modification. S345, S417, and S429 each carry phosphoserine. Residues 412–845 (STFSGSITGP…HAIVKEVTQG (434 aa)) form a tail region. An O-linked (GlcNAc) threonine glycan is attached at T431. A phosphoserine mark is found at S467 and S483. A disordered region spans residues 483–783 (SAKEEKEEAE…GEDRSDDKVV (301 aa)). Residues 489–499 (EEAEEKEEEPE) show a composition bias toward acidic residues. A compositionally biased stretch (basic and acidic residues) spans 500 to 510 (VEKSPVKSPEA). Residues S503 and S507 each carry the phosphoserine modification. Residues 511–533 (KEEEEGEKEEEEEGQEEEEEEDE) are compositionally biased toward acidic residues. Basic and acidic residues predominate over residues 534–553 (GVKSDQAEEGGSEKEGSSEK). 4 positions are modified to phosphoserine: S537, S545, S550, and S551. Over residues 554–575 (DEGEQEEEGETEAEGEGEEAEA) the composition is skewed to acidic residues. Phosphothreonine is present on T564. The span at 576–603 (KEEKKTEGKVEEMAIKEEIKVEKPEKAK) shows a compositional bias: basic and acidic residues. 9 positions are modified to phosphoserine: S604, S609, S643, S667, S687, S713, S721, S751, and S767. 2 stretches are compositionally biased toward basic and acidic residues: residues 610-675 (PVEE…KAVE) and 687-709 (SLEK…KAEE). Basic and acidic residues-rich tracts occupy residues 718 to 730 (GDKS…KEDI) and 746 to 758 (TQEK…EEKG). Residues 769-783 (AEEKKGEDRSDDKVV) are compositionally biased toward basic and acidic residues.

It belongs to the intermediate filament family. In terms of assembly, forms heterodimers with NEFL; which can further hetero-oligomerize (in vitro). Forms heterodimers with INA (in vitro). Post-translationally, there are a number of repeats of the tripeptide K-S-P, NFM is phosphorylated on a number of the serines in this motif. It is thought that phosphorylation of NFM results in the formation of interfilament cross bridges that are important in the maintenance of axonal caliber. In terms of processing, phosphorylation seems to play a major role in the functioning of the larger neurofilament polypeptides (NF-M and NF-H), the levels of phosphorylation being altered developmentally and coincidentally with a change in the neurofilament function. Phosphorylated in the head and rod regions by the PKC kinase PKN1, leading to the inhibition of polymerization. In terms of tissue distribution, expressed in the dorsal root ganglion neurons (at protein level).

The protein resides in the cytoplasm. It is found in the cytoskeleton. It localises to the cell projection. Its subcellular location is the axon. In terms of biological role, neurofilaments usually contain three intermediate filament proteins: NEFL, NEFM, and NEFH which are involved in the maintenance of neuronal caliber. May additionally cooperate with the neuronal intermediate filament proteins PRPH and INA to form neuronal filamentous networks. This chain is Neurofilament medium polypeptide (Nefm), found in Rattus norvegicus (Rat).